The chain runs to 128 residues: Glycine cleavage system H protein (128 aa).

In terms of domain architecture, Lipoyl-binding spans 25–107 (TFKVGITDHA…YEAGWLFTVR (83 aa)). N6-lipoyllysine is present on Lys66.

This sequence belongs to the GcvH family. In terms of assembly, the glycine cleavage system is composed of four proteins: P, T, L and H. (R)-lipoate is required as a cofactor.

The glycine cleavage system catalyzes the degradation of glycine. The H protein shuttles the methylamine group of glycine from the P protein to the T protein. The protein is Glycine cleavage system H protein of Kocuria rhizophila (strain ATCC 9341 / DSM 348 / NBRC 103217 / DC2201).